Reading from the N-terminus, the 285-residue chain is Diaminopimelate epimerase (285 aa).

Substrate-binding residues include Asn-11 and Asn-62. Catalysis depends on Cys-71, which acts as the Proton donor. Substrate is bound by residues 72–73 (GN), Asn-167, Asn-200, and 218–219 (ER). Catalysis depends on Cys-227, which acts as the Proton acceptor. 228–229 (GT) serves as a coordination point for substrate.

Belongs to the diaminopimelate epimerase family. As to quaternary structure, homodimer.

The protein resides in the cytoplasm. It catalyses the reaction (2S,6S)-2,6-diaminopimelate = meso-2,6-diaminopimelate. Its pathway is amino-acid biosynthesis; L-lysine biosynthesis via DAP pathway; DL-2,6-diaminopimelate from LL-2,6-diaminopimelate: step 1/1. In terms of biological role, catalyzes the stereoinversion of LL-2,6-diaminopimelate (L,L-DAP) to meso-diaminopimelate (meso-DAP), a precursor of L-lysine and an essential component of the bacterial peptidoglycan. The polypeptide is Diaminopimelate epimerase (Agathobacter rectalis (strain ATCC 33656 / DSM 3377 / JCM 17463 / KCTC 5835 / VPI 0990) (Eubacterium rectale)).